Reading from the N-terminus, the 274-residue chain is Large ribosomal subunit protein uL2cz/uL2cy (274 aa).

2 disordered regions span residues methionine 1–valine 22 and proline 225–lysine 274.

The protein belongs to the universal ribosomal protein uL2 family. In terms of assembly, part of the 50S ribosomal subunit.

It is found in the plastid. Its subcellular location is the chloroplast. The polypeptide is Large ribosomal subunit protein uL2cz/uL2cy (rpl2-A) (Arabis hirsuta (Hairy rock-cress)).